The primary structure comprises 57 residues: UPF0391 membrane protein RPC_2356 (57 aa).

2 helical membrane passes run 6 to 26 (WALI…TGIS) and 35 to 55 (ILFY…LTIF).

Belongs to the UPF0391 family.

Its subcellular location is the cell membrane. The protein is UPF0391 membrane protein RPC_2356 of Rhodopseudomonas palustris (strain BisB18).